Here is an 83-residue protein sequence, read N- to C-terminus: MSSGGLLLLLGLLTLWEVLTPVSSKDRPRFCELPADPGPCNGLFQAFYYNPVQRTCLKFRYGGCKGNPNTFKTIEECKRTCAA.

Residues Met1 to Ser24 form the signal peptide. The region spanning Cys31–Cys81 is the BPTI/Kunitz inhibitor domain. Cystine bridges form between Cys31–Cys81, Cys40–Cys64, and Cys56–Cys77.

Belongs to the venom Kunitz-type family. In terms of tissue distribution, expressed by the venom gland.

It localises to the secreted. Its function is as follows. Serine protease inhibitor homolog that only shows inhibitory activity against MMP2. In Pseudechis australis (Mulga snake), this protein is Kunitz-type serine protease inhibitor homolog mulgin-1.